The chain runs to 1152 residues: Syntaxin-binding protein 5 (1152 aa).

The interval 14-35 (TAGSSSASQQQQQQQHPPGNRE) is disordered. Over residues 17–28 (SSSASQQQQQQQ) the composition is skewed to low complexity. WD repeat units follow at residues 62-95 (SALA…CYCQ), 102-141 (VIQL…SLKF), 146-182 (VTFC…GYVI), 201-235 (HISD…DYRY), 241-273 (IHSV…PTKP), 295-337 (PILK…KSTA), 345-379 (IVDF…LIDL), 401-478 (TCCE…YKLK), 506-620 (QIIS…ELVI), and 634-696 (TSLA…SGAG). 2 disordered regions span residues 557–596 (TPEG…GLRD) and 675–731 (SNDP…QKVN). S693 carries the post-translational modification Phosphoserine. Positions 713-722 (SPTSGSSSPH) are enriched in low complexity. At S724 the chain carries Phosphoserine; by PKA. S760 is subject to Phosphoserine. T763 is modified (phosphothreonine). S783 bears the Phosphoserine mark. Phosphothreonine is present on T785. S786 carries the phosphoserine modification. 4 WD repeats span residues 795–852 (ISAL…SGTI), 861–935 (RMAF…QNCA), 940–984 (ITET…LDVY), and 998–1021 (CFAN…TYSQ). Residues 879-893 (WTEHNVPEEKDEKEK) show a composition bias toward basic and acidic residues. The disordered stretch occupies residues 879–907 (WTEHNVPEEKDEKEKLKKRRPVSVSPSSS). A phosphoserine mark is found at S901 and S903. The residue at position 1040 (T1040) is a Phosphothreonine. Phosphoserine is present on residues S1059 and S1132. In terms of domain architecture, v-SNARE coiled-coil homology spans 1087–1147 (GIEGVKGAAS…HEMMLKYKDK (61 aa)).

This sequence belongs to the WD repeat L(2)GL family. Part of a complex that contains STXBP5, STX4A and SNAP23. Interacts with STX1A and STX4A via its v-SNARE homology domain. Part of a complex that contains STX1, STXBP5, SNAP25 and SYT1. Post-translationally, phosphorylation by PKA reduces interaction with STX1A and enhances synaptic neurotransmitter release. In terms of tissue distribution, isoform 1 is detected in heart, brain, lung, liver, skeletal muscle, kidney and testis. Isoform 2 is detected in brain and in testis. Isoform 3 is detected in testis.

It is found in the cytoplasm. It localises to the cell membrane. Its subcellular location is the cytoplasmic vesicle membrane. The protein resides in the synapse. The protein localises to the cytoplasmic vesicle. It is found in the secretory vesicle. It localises to the synaptic vesicle. Functionally, inhibits translocation of GLUT4 from intracellular vesicles to the plasma membrane. Plays a regulatory role in calcium-dependent exocytosis and neurotransmitter release. Inhibits membrane fusion between transport vesicles and the plasma membrane. May modulate the assembly of trans-SNARE complexes between transport vesicles and the plasma membrane. Competes with STXBP1 for STX1 binding. The sequence is that of Syntaxin-binding protein 5 (Stxbp5) from Rattus norvegicus (Rat).